The following is a 332-amino-acid chain: 30 kDa heat shock protein (332 aa).

Over 1 to 34 (MNDTLSSFLNRNEALGLNPPHGLDMHITKRGSDW) the chain is Extracellular. The helical transmembrane segment at 35–55 (LWAVFAVFGFILLCYVVMFFI) threads the bilayer. Topologically, residues 56–65 (AENKGSRLTR) are cytoplasmic. A helical membrane pass occupies residues 66-86 (YALAPAFLITFFEFFAFFTYA). Topologically, residues 87–121 (SDLGWTGVQAEFNHVKVSKSITGEVPGIRQIFYSK) are extracellular. Residues 122–142 (YIAWFLSWPCLLFLIELAAST) traverse the membrane as a helical segment. At 143–157 (TGENDDISALDMVHS) the chain is on the cytoplasmic side. Residues 158–178 (LLIQIVGTLFWVVSLLVGSLI) traverse the membrane as a helical segment. The Extracellular portion of the chain corresponds to 179-181 (KST). A helical membrane pass occupies residues 182–202 (YKWGYYTIGAVAMLVTQGVIC). Over 203–215 (QRQFFNLKTRGFN) the chain is Cytoplasmic. A helical membrane pass occupies residues 216-236 (ALMLCTCMVIVWLYFICWGLS). The Extracellular segment spans residues 237–248 (DGGNRIQPDGEA). Residues 249-269 (IFYGVLDLCVFAIYPCYLLIA) form a helical membrane-spanning segment. Over 270-332 (VSRDGKLPRL…EAEQAVEDTA (63 aa)) the chain is Cytoplasmic. The disordered stretch occupies residues 290-332 (ATDDVEDAAPETKEAVPESPRASGETAIHEPEPEAEQAVEDTA). Phosphoserine is present on Ser-308. Positions 322–332 (PEAEQAVEDTA) are enriched in acidic residues. Thr-331 carries the phosphothreonine modification.

The protein belongs to the archaeal/bacterial/fungal opsin family.

It is found in the membrane. In terms of biological role, probably cooperates with other heat shock proteins in the translocation of polypeptides through membranes. It may counteract the altering effect of heat shock on the plasma membrane. The protein is 30 kDa heat shock protein (HSP30) of Saccharomyces cerevisiae (strain ATCC 204508 / S288c) (Baker's yeast).